The following is a 227-amino-acid chain: MAYPHQLGFQDATSPIMEELLSFHDHTLMIVFLISSLVLYLISLMLTTKLTHTSTMDAQEVETVWTILPAIILIMIALPSLRILYMMDEINNPLLTVKTMGHQWYWTYEYTDYEELNFDSYMVPTTDLNPGELRLLEVDNRVVLPMETPIRMLISSEDVLHSWTVPSMGLKTDAIPGRLNQATLTSSRPGLFYGQCSEICGSNHSFMPIVIEMVPLKSFENWTTSMT.

Residues Met-1–Ser-14 lie on the Mitochondrial intermembrane side of the membrane. The chain crosses the membrane as a helical span at residues Pro-15 to Met-45. Residues Leu-46–Gln-59 lie on the Mitochondrial matrix side of the membrane. Residues Glu-60–Met-87 form a helical membrane-spanning segment. At Asp-88–Thr-227 the chain is on the mitochondrial intermembrane side. 6 residues coordinate Cu cation: His-161, Cys-196, Glu-198, Cys-200, His-204, and Met-207. Position 198 (Glu-198) interacts with Mg(2+).

The protein belongs to the cytochrome c oxidase subunit 2 family. As to quaternary structure, component of the cytochrome c oxidase (complex IV, CIV), a multisubunit enzyme composed of 14 subunits. The complex is composed of a catalytic core of 3 subunits MT-CO1, MT-CO2 and MT-CO3, encoded in the mitochondrial DNA, and 11 supernumerary subunits COX4I, COX5A, COX5B, COX6A, COX6B, COX6C, COX7A, COX7B, COX7C, COX8 and NDUFA4, which are encoded in the nuclear genome. The complex exists as a monomer or a dimer and forms supercomplexes (SCs) in the inner mitochondrial membrane with NADH-ubiquinone oxidoreductase (complex I, CI) and ubiquinol-cytochrome c oxidoreductase (cytochrome b-c1 complex, complex III, CIII), resulting in different assemblies (supercomplex SCI(1)III(2)IV(1) and megacomplex MCI(2)III(2)IV(2)). Found in a complex with TMEM177, COA6, COX18, COX20, SCO1 and SCO2. Interacts with TMEM177 in a COX20-dependent manner. Interacts with COX20. Interacts with COX16. Cu cation serves as cofactor.

The protein localises to the mitochondrion inner membrane. The enzyme catalyses 4 Fe(II)-[cytochrome c] + O2 + 8 H(+)(in) = 4 Fe(III)-[cytochrome c] + 2 H2O + 4 H(+)(out). Its function is as follows. Component of the cytochrome c oxidase, the last enzyme in the mitochondrial electron transport chain which drives oxidative phosphorylation. The respiratory chain contains 3 multisubunit complexes succinate dehydrogenase (complex II, CII), ubiquinol-cytochrome c oxidoreductase (cytochrome b-c1 complex, complex III, CIII) and cytochrome c oxidase (complex IV, CIV), that cooperate to transfer electrons derived from NADH and succinate to molecular oxygen, creating an electrochemical gradient over the inner membrane that drives transmembrane transport and the ATP synthase. Cytochrome c oxidase is the component of the respiratory chain that catalyzes the reduction of oxygen to water. Electrons originating from reduced cytochrome c in the intermembrane space (IMS) are transferred via the dinuclear copper A center (CU(A)) of subunit 2 and heme A of subunit 1 to the active site in subunit 1, a binuclear center (BNC) formed by heme A3 and copper B (CU(B)). The BNC reduces molecular oxygen to 2 water molecules using 4 electrons from cytochrome c in the IMS and 4 protons from the mitochondrial matrix. This Georychus capensis (Cape mole rat) protein is Cytochrome c oxidase subunit 2 (MT-CO2).